Here is a 130-residue protein sequence, read N- to C-terminus: MYSGICICVFLAVLSASSFGQQTAGSHNGNPLAAELEQSLTEHHRHVRAPSSAGPLKPVPRLDGSIDQRANIGALLAKYLQQARKGPTGRISVMGNRVQSIDPTHRINDRDYMGWMDFGRRSAEEYEYSS.

The signal sequence occupies residues 1-20 (MYSGICICVFLAVLSASSFG). A propeptide spanning residues 21–48 (QQTAGSHNGNPLAAELEQSLTEHHRHVR) is cleaved from the precursor. A disordered region spans residues 40–59 (LTEHHRHVRAPSSAGPLKPV). Y112 carries the post-translational modification Sulfotyrosine. A Phenylalanine amide modification is found at F118. The propeptide occupies 122-130 (SAEEYEYSS). Sulfotyrosine is present on residues Y126 and Y128.

Belongs to the gastrin/cholecystokinin family. The precursor is cleaved by proteases to produce a number of active cholecystokinins. As to expression, highly concentrated in the duodenum. Also localized in more distal parts of the small intestine.

It is found in the secreted. Its function is as follows. This peptide hormone induces gall bladder contraction and the release of pancreatic enzymes in the gut. Its function in the brain is not clear. This chain is Cholecystokinin (CCK), found in Struthio camelus (Common ostrich).